The primary structure comprises 269 residues: 4-hydroxy-tetrahydrodipicolinate reductase (269 aa).

NAD(+) is bound by residues 8-13 (GAAGRM) and E34. R35 contacts NADP(+). NAD(+) is bound by residues 98–100 (GTT) and 122–125 (APNY). H155 serves as the catalytic Proton donor/acceptor. H156 is a (S)-2,3,4,5-tetrahydrodipicolinate binding site. The active-site Proton donor is the K159. 165–166 (GT) provides a ligand contact to (S)-2,3,4,5-tetrahydrodipicolinate.

Belongs to the DapB family.

The protein resides in the cytoplasm. It catalyses the reaction (S)-2,3,4,5-tetrahydrodipicolinate + NAD(+) + H2O = (2S,4S)-4-hydroxy-2,3,4,5-tetrahydrodipicolinate + NADH + H(+). The catalysed reaction is (S)-2,3,4,5-tetrahydrodipicolinate + NADP(+) + H2O = (2S,4S)-4-hydroxy-2,3,4,5-tetrahydrodipicolinate + NADPH + H(+). It participates in amino-acid biosynthesis; L-lysine biosynthesis via DAP pathway; (S)-tetrahydrodipicolinate from L-aspartate: step 4/4. Functionally, catalyzes the conversion of 4-hydroxy-tetrahydrodipicolinate (HTPA) to tetrahydrodipicolinate. The protein is 4-hydroxy-tetrahydrodipicolinate reductase of Vibrio vulnificus (strain CMCP6).